Here is a 362-residue protein sequence, read N- to C-terminus: Cobalt-precorrin-5B C(1)-methyltransferase (362 aa).

This sequence belongs to the CbiD family.

It catalyses the reaction Co-precorrin-5B + S-adenosyl-L-methionine = Co-precorrin-6A + S-adenosyl-L-homocysteine. The protein operates within cofactor biosynthesis; adenosylcobalamin biosynthesis; cob(II)yrinate a,c-diamide from sirohydrochlorin (anaerobic route): step 6/10. In terms of biological role, catalyzes the methylation of C-1 in cobalt-precorrin-5B to form cobalt-precorrin-6A. This Geotalea daltonii (strain DSM 22248 / JCM 15807 / FRC-32) (Geobacter daltonii) protein is Cobalt-precorrin-5B C(1)-methyltransferase.